A 1607-amino-acid polypeptide reads, in one-letter code: Putative molluscan insulin-related peptide(s) receptor (1607 aa).

An N-terminal signal peptide occupies residues 1 to 35 (MHPGSISFNMIINKCIPICLFILFIMMMEFTVSKA). 17 N-linked (GlcNAc...) asparagine glycosylation sites follow: asparagine 82, asparagine 188, asparagine 245, asparagine 275, asparagine 332, asparagine 343, asparagine 495, asparagine 520, asparagine 663, asparagine 710, asparagine 778, asparagine 796, asparagine 802, asparagine 868, asparagine 879, asparagine 940, and asparagine 953. Fibronectin type-III domains follow at residues 517 to 632 (HDLN…TYPF), 636 to 726 (EPTD…SKEE), and 756 to 861 (LPDE…TKDS). The Extracellular segment spans residues 698–975 (EKVKIEEEGK…RPPDPESSNT (278 aa)). Residues 870 to 967 (TTVDTEIETN…LERFFIVPRP (98 aa)) form the Fibronectin type-III 4 domain. Residues 976–996 (LLIVAIVLAFFGVLTVSLIVA) form a helical membrane-spanning segment. Residues 997-1607 (CVYYKQKIRS…WSTLKMVLVL (611 aa)) are Cytoplasmic-facing. Residues 1037–1308 (IKLIKELGQG…AIIEYLLPKL (272 aa)) enclose the Protein kinase domain. Residues 1043–1051 (LGQGSFGMV) and lysine 1072 contribute to the ATP site. The active-site Proton acceptor is aspartate 1173. A Phosphotyrosine; by autocatalysis modification is found at tyrosine 1199. Disordered stretches follow at residues 1328–1352 (GAGEGTLAEPEGSDDSSSINSLSCE) and 1501–1539 (TLNGNQSSHNNNSFELMTPDPLKSGPASESSNGVSSSSW). Over residues 1503–1515 (NGNQSSHNNNSFE) the composition is skewed to polar residues. Over residues 1524 to 1538 (SGPASESSNGVSSSS) the composition is skewed to low complexity.

The protein belongs to the protein kinase superfamily. Tyr protein kinase family. Insulin receptor subfamily. Probable tetramer of 2 alpha and 2 beta chains linked by disulfide bonds. The alpha chains contribute to the formation of the ligand-binding domain, while the beta chains carry the kinase domain. Mn(2+) serves as cofactor.

It is found in the membrane. The enzyme catalyses L-tyrosyl-[protein] + ATP = O-phospho-L-tyrosyl-[protein] + ADP + H(+). Its function is as follows. This receptor probably binds to the four different molluscan insulin-related peptides and has a tyrosine-protein kinase activity. In Lymnaea stagnalis (Great pond snail), this protein is Putative molluscan insulin-related peptide(s) receptor.